Consider the following 1069-residue polypeptide: RE1-silencing transcription factor (1069 aa).

Positions 32-121 are interaction with SIN3A; that stretch reads DLHDLSKAEL…SLELSVVEPQ (90 aa). Residues 43–57 are interaction with SIN3B; sequence APQLIMLANVALTGE. The segment at 85-104 is disordered; sequence SDSEGEGLEESAELKGDPSG. Residues 144-417 form an interaction with ZFP90 region; it reads PVAEDKCKNL…KSKHPTCPSK (274 aa). The C2H2-type 1 zinc-finger motif lies at 158–180; that stretch reads FRCKPCQYEAESEEQFVHHIRVH. The interval 200-211 is required for binding to the neuron-restrictive silencer element; that stretch reads SGASPSEEGEFS. 7 consecutive C2H2-type zinc fingers follow at residues 215–237, 247–269, 275–297, 303–325, 331–354, 360–382, and 388–411; these read IRCD…LKHH, YKCI…LRNH, YTCS…VRTH, YKCE…MRTH, FKCD…RQVH, LNCP…VELH, and FNCP…KSKH. Disordered stretches follow at residues 425–737 and 830–1022; these read KLKK…MELP and KASK…GKEG. The span at 451-482 shows a compositional bias: basic and acidic residues; sequence EQAKTKGVDASARRSERPVKGVGKDVPKEKKP. The span at 484-493 shows a compositional bias: polar residues; that stretch reads SNASVVQVTT. Basic and acidic residues-rich tracts occupy residues 498–511 and 554–576; these read SAVE…KHTD and ESKP…KADK. Over residues 584 to 600 the composition is skewed to basic residues; sequence KGGKKTALKTKTAKKGS. Positions 630–643 are enriched in polar residues; sequence AVVTPSGSTQTELS. Composition is skewed to pro residues over residues 679–706 and 713–734; these read PSPP…PCPM and PSPP…PLPM. Basic and acidic residues-rich tracts occupy residues 851–860 and 876–886; these read RREETPKDQE and GGTEEAGESRA. A compositionally biased stretch (low complexity) spans 894 to 904; it reads STSALSSEQSS. Basic and acidic residues predominate over residues 930–943; it reads TEQKTDRVPLKDSA. Position 948 is a phosphoserine (serine 948). Low complexity predominate over residues 957-968; sequence EAAAPAVVASPP. The interval 981–1059 is interaction with RCOR1; that stretch reads EGIHSHDGSD…HLNRHLVNVY (79 aa). The segment at 1032–1054 adopts a C2H2-type 9 zinc-finger fold; that stretch reads FVCIFCDRSFRKEKDYSKHLNRH.

As to quaternary structure, isoform 1 and isoform 6 form heterodimers. Isoform 6: Forms homodimers and homooligomers; binds to the neuron-restrictive silencer element (NRSE) as monomer. Interacts with SIN3A, SIN3B and RCOR1. Interacts with CDYL. Interacts with EHMT1 and EHMT2 only in the presence of CDYL. Part of a complex containing at least CDYL, REST, WIZ, SETB1, EHMT1 and EHMT2. Interacts (via zinc-finger DNA-binding domain) with ZFP90 (via N- and C-termini); the interaction inhibits REST repressor activity. Interacts (via C2H2-type zinc finger 5) with PRICKLE1. Interacts with FBXW11 and BTRC. Interacts with USP7. O-glycosylated. In terms of processing, phosphorylated; phosphorylation is required for ubiquitination. Post-translationally, ubiquitinated; ubiquitination is mediated by BTRC and leads to proteasomal degradation in G2 phase. Ubiquitination increases during neuronal differentiation. Deubiquitinated by USP7; leading to its stabilization and promoting the maintenance of neural progenitor cells. Expressed in the hippocampus including the granule cell layer of the dentate gyrus, the pyramidal cell layers of CA1 and CA3, the apical and basilar dendrite layers of the stratum radiatum and stratum oriens of CA1, the stratum lucidum and stratum oriens of CA3 and in astroglia (at protein level). Expressed in the brain, with the highest levels in the neurons of hippocampus, pons/medulla and midbrain.

The protein localises to the nucleus. The protein resides in the cytoplasm. In terms of biological role, transcriptional repressor which binds neuron-restrictive silencer element (NRSE) and represses neuronal gene transcription in non-neuronal cells. Restricts the expression of neuronal genes by associating with two distinct corepressors, SIN3A and RCOR1, which in turn recruit histone deacetylase to the promoters of REST-regulated genes. Mediates repression by recruiting the BHC complex at RE1/NRSE sites which acts by deacetylating and demethylating specific sites on histones, thereby acting as a chromatin modifier. Transcriptional repression by REST-CDYL via the recruitment of histone methyltransferase EHMT2 may be important in transformation suppression. Represses the expression of SRRM4 in non-neural cells to prevent the activation of neural-specific splicing events and to prevent production of REST isoform 6. Repressor activity may be inhibited by forming heterodimers with isoform 6, thereby preventing binding to NRSE or binding to corepressors and leading to derepression of target genes. Also maintains repression of neuronal genes in neural stem cells, and allows transcription and differentiation into neurons by dissociation from RE1/NRSE sites of target genes. Thereby is involved in maintaining the quiescent state of adult hippocampal neural stem cells and preventing premature differentiation into mature neurons. Plays a role in the developmental switch in synaptic NMDA receptor composition during postnatal development, by repressing GRIN2B expression and thereby altering NMDA receptor properties from containing primarily GRIN2B to primarily GRIN2A subunits. Acts as a regulator of osteoblast differentiation. Key repressor of gene expression in hypoxia; represses genes in hypoxia by direct binding to an RE1/NRSE site on their promoter regions. May also function in stress resistance in the brain during aging; possibly by regulating expression of genes involved in cell death and in the stress response. Repressor of gene expression in the hippocampus after ischemia by directly binding to RE1/NRSE sites and recruiting SIN3A and RCOR1 to promoters of target genes, thereby promoting changes in chromatin modifications and ischemia-induced cell death. After ischemia, might play a role in repression of miR-132 expression in hippocampal neurons, thereby leading to neuronal cell death. Binds to the 3' region of the neuron-restrictive silencer element (NRSE), with lower affinity than full-length REST isoform 1. Exhibits weaker repressor activity compared to isoform 1. May negatively regulate the repressor activity of isoform 1 by binding to isoform 1, thereby preventing its binding to NRSE and leading to derepression of target genes. However, in another study, does not appear to be implicated in repressor activity of a NRSE motif-containing reporter construct nor in inhibitory activity on the isoform 1 transcriptional repressor activity. Post-transcriptional inactivation of REST by SRRM4-dependent alternative splicing into isoform 6 is required in mechanosensory hair cells in the inner ear for derepression of neuronal genes and hearing. The chain is RE1-silencing transcription factor (Rest) from Rattus norvegicus (Rat).